The primary structure comprises 273 residues: Thiazole synthase (273 aa).

Catalysis depends on Lys110, which acts as the Schiff-base intermediate with DXP. 1-deoxy-D-xylulose 5-phosphate is bound by residues Gly171, 198–199 (AG), and 220–221 (NS).

This sequence belongs to the ThiG family. As to quaternary structure, homotetramer. Forms heterodimers with either ThiH or ThiS.

It localises to the cytoplasm. The enzyme catalyses [ThiS sulfur-carrier protein]-C-terminal-Gly-aminoethanethioate + 2-iminoacetate + 1-deoxy-D-xylulose 5-phosphate = [ThiS sulfur-carrier protein]-C-terminal Gly-Gly + 2-[(2R,5Z)-2-carboxy-4-methylthiazol-5(2H)-ylidene]ethyl phosphate + 2 H2O + H(+). The protein operates within cofactor biosynthesis; thiamine diphosphate biosynthesis. Functionally, catalyzes the rearrangement of 1-deoxy-D-xylulose 5-phosphate (DXP) to produce the thiazole phosphate moiety of thiamine. Sulfur is provided by the thiocarboxylate moiety of the carrier protein ThiS. In vitro, sulfur can be provided by H(2)S. The polypeptide is Thiazole synthase (Hydrogenovibrio crunogenus (strain DSM 25203 / XCL-2) (Thiomicrospira crunogena)).